Here is an 833-residue protein sequence, read N- to C-terminus: Putative GPI inositol-deacylase C (833 aa).

Ser130 is a catalytic residue. N-linked (GlcNAc...) asparagine glycans are attached at residues Asn191 and Asn456. The next 5 helical transmembrane spans lie at 521 to 541 (ILFI…QFHA), 560 to 580 (YLLT…LSQV), 617 to 637 (VLAP…TELV), 672 to 692 (TVFV…QLAF), and 723 to 743 (TICV…AVWI). N-linked (GlcNAc...) asparagine glycosylation is present at Asn772. Residues 787-807 (LLLAYTSLHCLFYGMMQAFMI) traverse the membrane as a helical segment.

The protein belongs to the GPI inositol-deacylase family.

Its subcellular location is the endoplasmic reticulum membrane. In terms of biological role, involved in inositol deacylation of GPI-anchored proteins which plays important roles in the quality control and ER-associated degradation of GPI-anchored proteins. The sequence is that of Putative GPI inositol-deacylase C (BST1C) from Yarrowia lipolytica (strain CLIB 122 / E 150) (Yeast).